We begin with the raw amino-acid sequence, 86 residues long: Late effector protein 1 (86 aa).

Residues 1 to 24 (MRSHQMAAFFAVSLMMMVVLGALS) form the signal peptide.

It belongs to the lep1 family. In terms of assembly, interacts at the cell wall with secreted rep1 repellent peptides.

It is found in the secreted. Its subcellular location is the cell wall. Core effector contributing to spore formation and tumor formation at the host plant. Modulates surface hydrophobicity promoting cell-cell or cell-surface contacts. Lep1 and rep1 interact in aerial hyphae to form a strong hydrophobic layer. Plays a crucial role in hyphal aggregation that might be a prerequisite for strong proliferation of diploid cells and for induction of the morphological changes associated with spore formation. The polypeptide is Late effector protein 1 (Mycosarcoma maydis (Corn smut fungus)).